The sequence spans 555 residues: F-box protein COS111 (555 aa).

Disordered regions lie at residues 31–82 and 124–147; these read MSVS…SVSN and DHSI…KQHH. Over residues 32–42 the composition is skewed to low complexity; that stretch reads SVSSRSSQEES. Residues 48 to 61 are compositionally biased toward polar residues; sequence ESVSSLSMQEQQTE. Positions 129-142 are enriched in low complexity; sequence SGVTRSTVSTVRPT. The 51-residue stretch at 196–246 folds into the F-box domain; that stretch reads HKDLNSLPHEIMSKIVSHLDQRDVTMCLYVNKNMYSTAVRQLYKEPFFSST. Over residues 327–346 the composition is skewed to low complexity; the sequence is SSSSLSCSRTSSNSNSSTES. Residues 327 to 354 are disordered; the sequence is SSSSLSCSRTSSNSNSSTESKPVKKRRS.

F-box protein probably involved in ubiquitin conjugation pathway. This chain is F-box protein COS111 (COS111), found in Yarrowia lipolytica (strain CLIB 122 / E 150) (Yeast).